The chain runs to 343 residues: Glyceraldehyde-3-phosphate dehydrogenase (343 aa).

NAD(+) contacts are provided by residues 11–12 (TI) and G110. A D-glyceraldehyde 3-phosphate-binding site is contributed by 139–141 (SCN). Residue C140 is the Nucleophile of the active site. R168 serves as a coordination point for NAD(+). A D-glyceraldehyde 3-phosphate-binding site is contributed by 194 to 195 (HG). Q301 provides a ligand contact to NAD(+).

This sequence belongs to the glyceraldehyde-3-phosphate dehydrogenase family. Homotetramer.

The protein resides in the cytoplasm. The catalysed reaction is D-glyceraldehyde 3-phosphate + phosphate + NADP(+) = (2R)-3-phospho-glyceroyl phosphate + NADPH + H(+). It catalyses the reaction D-glyceraldehyde 3-phosphate + phosphate + NAD(+) = (2R)-3-phospho-glyceroyl phosphate + NADH + H(+). It participates in carbohydrate degradation; glycolysis; pyruvate from D-glyceraldehyde 3-phosphate: step 1/5. The protein is Glyceraldehyde-3-phosphate dehydrogenase of Methanoregula boonei (strain DSM 21154 / JCM 14090 / 6A8).